The primary structure comprises 241 residues: tRNA pseudouridine synthase A (241 aa).

Asp-52 (nucleophile) is an active-site residue. Residue Tyr-111 participates in substrate binding.

Belongs to the tRNA pseudouridine synthase TruA family. In terms of assembly, homodimer.

It carries out the reaction uridine(38/39/40) in tRNA = pseudouridine(38/39/40) in tRNA. Formation of pseudouridine at positions 38, 39 and 40 in the anticodon stem and loop of transfer RNAs. The polypeptide is tRNA pseudouridine synthase A (Ureaplasma urealyticum serovar 10 (strain ATCC 33699 / Western)).